The chain runs to 338 residues: Glyceraldehyde-3-phosphate dehydrogenase (338 aa).

NAD(+) is bound by residues 12–13 (RI), D34, and R79. D-glyceraldehyde 3-phosphate-binding positions include 150–152 (SCT), T181, 210–211 (TG), and R233. C151 acts as the Nucleophile in catalysis. N316 serves as a coordination point for NAD(+).

Belongs to the glyceraldehyde-3-phosphate dehydrogenase family. As to quaternary structure, homotetramer.

The protein resides in the cytoplasm. It carries out the reaction D-glyceraldehyde 3-phosphate + phosphate + NAD(+) = (2R)-3-phospho-glyceroyl phosphate + NADH + H(+). It participates in carbohydrate degradation; glycolysis; pyruvate from D-glyceraldehyde 3-phosphate: step 1/5. In Phaffia rhodozyma (Yeast), this protein is Glyceraldehyde-3-phosphate dehydrogenase (GPD).